The chain runs to 454 residues: Phosphoglucosamine mutase (454 aa).

Residue S104 is the Phosphoserine intermediate of the active site. S104, D244, D246, and D248 together coordinate Mg(2+). The residue at position 104 (S104) is a Phosphoserine.

Belongs to the phosphohexose mutase family. Mg(2+) serves as cofactor. In terms of processing, activated by phosphorylation.

The enzyme catalyses alpha-D-glucosamine 1-phosphate = D-glucosamine 6-phosphate. Functionally, catalyzes the conversion of glucosamine-6-phosphate to glucosamine-1-phosphate. The chain is Phosphoglucosamine mutase from Lacticaseibacillus paracasei (strain ATCC 334 / BCRC 17002 / CCUG 31169 / CIP 107868 / KCTC 3260 / NRRL B-441) (Lactobacillus paracasei).